Consider the following 212-residue polypeptide: uncharacterized protein (212 aa).

S-adenosyl-L-methionine is bound by residues glycine 53, glutamate 74, and aspartate 96.

Belongs to the methyltransferase superfamily. YrrT family.

Its function is as follows. Could be a S-adenosyl-L-methionine-dependent methyltransferase. This is an uncharacterized protein from Anoxybacillus flavithermus (strain DSM 21510 / WK1).